The sequence spans 281 residues: ATP phosphoribosyltransferase (281 aa).

Belongs to the ATP phosphoribosyltransferase family. Long subfamily. Requires Mg(2+) as cofactor.

It localises to the cytoplasm. It carries out the reaction 1-(5-phospho-beta-D-ribosyl)-ATP + diphosphate = 5-phospho-alpha-D-ribose 1-diphosphate + ATP. It participates in amino-acid biosynthesis; L-histidine biosynthesis; L-histidine from 5-phospho-alpha-D-ribose 1-diphosphate: step 1/9. Its activity is regulated as follows. Feedback inhibited by histidine. In terms of biological role, catalyzes the condensation of ATP and 5-phosphoribose 1-diphosphate to form N'-(5'-phosphoribosyl)-ATP (PR-ATP). Has a crucial role in the pathway because the rate of histidine biosynthesis seems to be controlled primarily by regulation of HisG enzymatic activity. The polypeptide is ATP phosphoribosyltransferase (Kocuria rhizophila (strain ATCC 9341 / DSM 348 / NBRC 103217 / DC2201)).